The primary structure comprises 207 residues: Probable mediator of RNA polymerase II transcription subunit 19b (207 aa).

The disordered stretch occupies residues 99 to 207; that stretch reads DTAPVELPPA…SSKLDEMGAM (109 aa). A compositionally biased stretch (basic residues) spans 127-152; it reads DRKHRKHKDKKEKDREHKKHKHKHKD. A compositionally biased stretch (basic and acidic residues) spans 153-167; the sequence is RIKDKDKDKDRDKKK. Residues 168–179 are compositionally biased toward basic residues; it reads EKSGHHDKKRKN.

It belongs to the plant Mediator complex subunit 19 family. As to quaternary structure, component of the Mediator complex.

It is found in the nucleus. Its function is as follows. Component of the Mediator complex, a coactivator involved in the regulated transcription of nearly all RNA polymerase II-dependent genes. Mediator functions as a bridge to convey information from gene-specific regulatory proteins to the basal RNA polymerase II transcription machinery. The Mediator complex, having a compact conformation in its free form, is recruited to promoters by direct interactions with regulatory proteins and serves for the assembly of a functional preinitiation complex with RNA polymerase II and the general transcription factors. This chain is Probable mediator of RNA polymerase II transcription subunit 19b (MED19B), found in Arabidopsis thaliana (Mouse-ear cress).